The chain runs to 30 residues: Thylakoid lumenal 13.3 kDa protein (30 aa).

The protein localises to the plastid. Its subcellular location is the chloroplast thylakoid lumen. This is Thylakoid lumenal 13.3 kDa protein from Spinacia oleracea (Spinach).